Reading from the N-terminus, the 872-residue chain is Protein SCD5 (872 aa).

Disordered regions lie at residues 1–98 (MSFD…SGGD) and 209–239 (PKPR…TGDQ). Residues 48–85 (FWDQGSRSHSDTTLSYRNNHSNTAADNATNVSSPQKDN) are compositionally biased toward polar residues. The short motif at 272-276 (KKVRF) is the KKRVK motif; Required for interaction with GLC7, endocytosis and actin cytoskeleton organization element. 2 disordered regions span residues 280 to 321 (ITFQ…LDFT) and 338 to 358 (SGLV…KKVL). 2 stretches are compositionally biased toward polar residues: residues 284–296 (DPPN…SNNS) and 339–348 (GLVSSLPSEQ). Repeat copies occupy residues 405 to 424 (QLPL…HLVR), 439 to 458 (QTGL…YLMR), 479 to 498 (SGGL…YLMK), 534 to 545 (SPNITLPQSNQQ), 564 to 575 (SPQHTYSNNVRI), 593 to 604 (PPQNTLPQHQQS), 608 to 619 (SPQNTIPQHQRS), 623 to 634 (SPQNTFTQNQPI), 636 to 647 (SPQHTYSNNQAT), 650 to 661 (SPQNTYTNNQQQ), 683 to 694 (PPQHMYSNVQKQ), and 717 to 728 (SPQNAANSYFQS). The segment at 405 to 448 (QLPLEPLKPTATGSANHLVREEYNQGLHPSNGAIQTGLQPLKPT) is 3 X 20 AA approximate repeats. 2 positions are modified to phosphothreonine; by PRK1: Thr-416 and Thr-450. Residues 460 to 489 (HMEQPQSIKPSSTPETVTNSGGLQPLKPTA) are disordered. Positions 462–481 (EQPQSIKPSSTPETVTNSGG) are enriched in polar residues. Thr-490 is modified (phosphothreonine; by PRK1). 2 disordered regions span residues 516–571 (QFTN…TYSN) and 591–620 (AFPP…QRSQ). The segment at 534–728 (SPNITLPQSN…QNAANSYFQS (195 aa)) is 9 X 12 AA approximate repeats. Position 564 is a phosphoserine (Ser-564). Positions 594-620 (PQNTLPQHQQSHLLSPQNTIPQHQRSQ) are enriched in polar residues. Residues 649–681 (ISPQNTYTNNQQQPQHLPPPPPPRAQQQQQGAI) are disordered. Residues 651-663 (PQNTYTNNQQQPQ) are compositionally biased toward low complexity. Over residues 697–727 (LVPTQPSYTNSPSIQSPNFLSPQNAANSYFQ) the composition is skewed to polar residues. Disordered stretches follow at residues 697-758 (LVPT…ISSF) and 806-838 (NSDI…QFPF). Residues 728 to 745 (SLLSSSPSPNPTPSNAST) are compositionally biased toward low complexity. Composition is skewed to polar residues over residues 746–758 (VNGN…ISSF) and 806–815 (NSDIHSQPNK). Over residues 823–835 (QQVHQQQQQQQQQ) the composition is skewed to low complexity.

As to quaternary structure, interacts (via KKVRF motif) with phosphatase GLC7. In terms of processing, phosphorylation by PRK1 and/or AKL1 on Thr-416, Thr-450 and Thr-490 of repeats 1-1, 1-2 and/or 1-3 negatively regulates SCD5 function in endocytosis and actin cytoskeleton organization.

It is found in the membrane. Its function is as follows. Regulates both fluid phase and receptor-mediated endocytosis. Involved in vesicular transport at a late stage of the secretory pathway. Regulates actin cytoskeleton organization. The polypeptide is Protein SCD5 (SCD5) (Saccharomyces cerevisiae (strain ATCC 204508 / S288c) (Baker's yeast)).